The primary structure comprises 187 residues: MISSNDFRTGTTIEIDGAVWRVVEFLHVKPGKGSAFVRSKLKAVKTGNVVEKTFRAGEMLPQALLEKASLQHTYMEGEDYVFMDMSTYEETRLSADQIGESRKYLKEGMEVNVVSWNGSPLEVELPNSVVLEITETDPGVKGDTATGGTKPAILETGAQVMVPLFLSIGEKIKVDTRSDSYLGRENG.

The protein belongs to the elongation factor P family.

It localises to the cytoplasm. Its pathway is protein biosynthesis; polypeptide chain elongation. Functionally, involved in peptide bond synthesis. Stimulates efficient translation and peptide-bond synthesis on native or reconstituted 70S ribosomes in vitro. Probably functions indirectly by altering the affinity of the ribosome for aminoacyl-tRNA, thus increasing their reactivity as acceptors for peptidyl transferase. The protein is Elongation factor P of Parasynechococcus marenigrum (strain WH8102).